Reading from the N-terminus, the 398-residue chain is 1-deoxy-D-xylulose 5-phosphate reductoisomerase (398 aa).

Positions 21, 22, 23, 24, 47, 50, and 127 each coordinate NADPH. Lysine 128 contacts 1-deoxy-D-xylulose 5-phosphate. Glutamate 129 lines the NADPH pocket. Residue aspartate 151 coordinates Mn(2+). Positions 152, 153, 177, and 200 each coordinate 1-deoxy-D-xylulose 5-phosphate. Position 153 (glutamate 153) interacts with Mn(2+). An NADPH-binding site is contributed by glycine 206. Residues serine 213, asparagine 218, lysine 219, and glutamate 222 each coordinate 1-deoxy-D-xylulose 5-phosphate. Mn(2+) is bound at residue glutamate 222.

The protein belongs to the DXR family. Mg(2+) serves as cofactor. It depends on Mn(2+) as a cofactor.

It catalyses the reaction 2-C-methyl-D-erythritol 4-phosphate + NADP(+) = 1-deoxy-D-xylulose 5-phosphate + NADPH + H(+). Its pathway is isoprenoid biosynthesis; isopentenyl diphosphate biosynthesis via DXP pathway; isopentenyl diphosphate from 1-deoxy-D-xylulose 5-phosphate: step 1/6. Catalyzes the NADPH-dependent rearrangement and reduction of 1-deoxy-D-xylulose-5-phosphate (DXP) to 2-C-methyl-D-erythritol 4-phosphate (MEP). This chain is 1-deoxy-D-xylulose 5-phosphate reductoisomerase, found in Mycolicibacterium smegmatis (strain ATCC 700084 / mc(2)155) (Mycobacterium smegmatis).